The sequence spans 156 residues: Cytochrome c-type biogenesis protein CcmE 2 (156 aa).

The Cytoplasmic segment spans residues 1 to 8; it reads MNPQRRRR. Residues 9–29 form a helical; Signal-anchor for type II membrane protein membrane-spanning segment; it reads LWLVLALVLAGGLATTLVAMA. Topologically, residues 30–156 are periplasmic; that stretch reads LQRNVAYLYT…AAAGQVGERQ (127 aa). Heme contacts are provided by histidine 123 and tyrosine 127. Residues 136–156 form a disordered region; it reads MGSAHRKHDVPAAAGQVGERQ.

The protein belongs to the CcmE/CycJ family.

It localises to the cell inner membrane. Functionally, heme chaperone required for the biogenesis of c-type cytochromes. Transiently binds heme delivered by CcmC and transfers the heme to apo-cytochromes in a process facilitated by CcmF and CcmH. This chain is Cytochrome c-type biogenesis protein CcmE 2, found in Xanthomonas axonopodis pv. citri (strain 306).